A 328-amino-acid chain; its full sequence is D-cysteine desulfhydrase (328 aa).

K51 bears the N6-(pyridoxal phosphate)lysine mark.

The protein belongs to the ACC deaminase/D-cysteine desulfhydrase family. Homodimer. The cofactor is pyridoxal 5'-phosphate.

The enzyme catalyses D-cysteine + H2O = hydrogen sulfide + pyruvate + NH4(+) + H(+). Functionally, catalyzes the alpha,beta-elimination reaction of D-cysteine and of several D-cysteine derivatives. It could be a defense mechanism against D-cysteine. In Escherichia coli O6:H1 (strain CFT073 / ATCC 700928 / UPEC), this protein is D-cysteine desulfhydrase.